We begin with the raw amino-acid sequence, 481 residues long: Arylsulfatase (481 aa).

Residues D11, Q12, and C51 each coordinate Ca(2+). Residue C51 is the Nucleophile of the active site. C51 is modified (3-oxoalanine (Cys)). H102 is a catalytic residue. Ca(2+) is bound by residues D302 and H303.

Belongs to the sulfatase family. Ca(2+) is required as a cofactor. Post-translationally, the conversion to 3-oxoalanine (also known as C-formylglycine, FGly), of a serine or cysteine residue in prokaryotes and of a cysteine residue in eukaryotes, is critical for catalytic activity.

The enzyme catalyses an aryl sulfate + H2O = a phenol + sulfate + H(+). Has sulfatase activity toward para-nitrophenyl sulfate, which is increased in presence of calcium ion. This Clostridium perfringens (strain 13 / Type A) protein is Arylsulfatase.